An 85-amino-acid chain; its full sequence is Small ribosomal subunit protein bS16 (85 aa).

The protein belongs to the bacterial ribosomal protein bS16 family.

This chain is Small ribosomal subunit protein bS16, found in Nitrosomonas eutropha (strain DSM 101675 / C91 / Nm57).